Consider the following 95-residue polypeptide: MALERSEVEKIAHLARLGLNESDIPQTTETLNSILGLIDQMQAVDTQGIEPLAHPLEATQRLRADVVSEHNQRDAYQAIAPAVESGLYLVPKVIE.

The protein belongs to the GatC family. Heterotrimer of A, B and C subunits.

The enzyme catalyses L-glutamyl-tRNA(Gln) + L-glutamine + ATP + H2O = L-glutaminyl-tRNA(Gln) + L-glutamate + ADP + phosphate + H(+). It catalyses the reaction L-aspartyl-tRNA(Asn) + L-glutamine + ATP + H2O = L-asparaginyl-tRNA(Asn) + L-glutamate + ADP + phosphate + 2 H(+). Its function is as follows. Allows the formation of correctly charged Asn-tRNA(Asn) or Gln-tRNA(Gln) through the transamidation of misacylated Asp-tRNA(Asn) or Glu-tRNA(Gln) in organisms which lack either or both of asparaginyl-tRNA or glutaminyl-tRNA synthetases. The reaction takes place in the presence of glutamine and ATP through an activated phospho-Asp-tRNA(Asn) or phospho-Glu-tRNA(Gln). This chain is Aspartyl/glutamyl-tRNA(Asn/Gln) amidotransferase subunit C, found in Ectopseudomonas mendocina (strain ymp) (Pseudomonas mendocina).